The following is a 514-amino-acid chain: 2,3-bisphosphoglycerate-independent phosphoglycerate mutase (514 aa).

Residues Asp-14 and Ser-64 each coordinate Mn(2+). The active-site Phosphoserine intermediate is the Ser-64. Residues His-125, 155–156 (RD), Arg-187, Arg-193, 263–266 (RADR), and Lys-336 contribute to the substrate site. Asp-403, His-407, Asp-444, His-445, and His-463 together coordinate Mn(2+).

This sequence belongs to the BPG-independent phosphoglycerate mutase family. In terms of assembly, monomer. The cofactor is Mn(2+).

It catalyses the reaction (2R)-2-phosphoglycerate = (2R)-3-phosphoglycerate. Its pathway is carbohydrate degradation; glycolysis; pyruvate from D-glyceraldehyde 3-phosphate: step 3/5. Insensitive to vanadate. Its function is as follows. Catalyzes the interconversion of 2-phosphoglycerate (2-PGA) and 3-phosphoglycerate (3-PGA). This is 2,3-bisphosphoglycerate-independent phosphoglycerate mutase from Escherichia coli (strain K12).